Consider the following 85-residue polypeptide: MAHKKAGGSTNNGRDSVSKRLGVKRFGGQVVLSGNILVRQRGTKFHPGTNVRKGKDDTLFATMDGKVIFAKKGKFMHQYVSIETA.

It belongs to the bacterial ribosomal protein bL27 family.

The sequence is that of Large ribosomal subunit protein bL27 from Ruthia magnifica subsp. Calyptogena magnifica.